A 154-amino-acid chain; its full sequence is Nascent polypeptide-associated complex subunit beta (154 aa).

The NAC-A/B domain occupies 33-98 (EQDDTKLIEA…PQEKNVTQLI (66 aa)). The segment at 125–154 (APTELNAGAPAGGDEGIPDLIDGEKFDEVE) is disordered.

Belongs to the NAC-beta family. In terms of assembly, part of the nascent polypeptide-associated complex (NAC), consisting of EGD2 and EGD1. NAC associates with ribosomes via EGD1.

Its subcellular location is the cytoplasm. It localises to the nucleus. Component of the nascent polypeptide-associated complex (NAC), a dynamic component of the ribosomal exit tunnel, protecting the emerging polypeptides from interaction with other cytoplasmic proteins to ensure appropriate nascent protein targeting. The NAC complex also promotes mitochondrial protein import by enhancing productive ribosome interactions with the outer mitochondrial membrane and blocks the inappropriate interaction of ribosomes translating non-secretory nascent polypeptides with translocation sites in the membrane of the endoplasmic reticulum. EGD1 may act as a transcription factor that exert a negative effect on the expression of several genes that are transcribed by RNA polymerase II. The protein is Nascent polypeptide-associated complex subunit beta (EGD1) of Scheffersomyces stipitis (strain ATCC 58785 / CBS 6054 / NBRC 10063 / NRRL Y-11545) (Yeast).